The chain runs to 217 residues: Probable transaldolase (217 aa).

Lysine 83 functions as the Schiff-base intermediate with substrate in the catalytic mechanism.

Belongs to the transaldolase family. Type 3B subfamily.

It localises to the cytoplasm. The enzyme catalyses D-sedoheptulose 7-phosphate + D-glyceraldehyde 3-phosphate = D-erythrose 4-phosphate + beta-D-fructose 6-phosphate. The protein operates within carbohydrate degradation; pentose phosphate pathway; D-glyceraldehyde 3-phosphate and beta-D-fructose 6-phosphate from D-ribose 5-phosphate and D-xylulose 5-phosphate (non-oxidative stage): step 2/3. In terms of biological role, transaldolase is important for the balance of metabolites in the pentose-phosphate pathway. This is Probable transaldolase from Hydrogenobaculum sp. (strain Y04AAS1).